A 630-amino-acid polypeptide reads, in one-letter code: DNA mismatch repair protein MutL (630 aa).

It belongs to the DNA mismatch repair MutL/HexB family.

Functionally, this protein is involved in the repair of mismatches in DNA. It is required for dam-dependent methyl-directed DNA mismatch repair. May act as a 'molecular matchmaker', a protein that promotes the formation of a stable complex between two or more DNA-binding proteins in an ATP-dependent manner without itself being part of a final effector complex. This is DNA mismatch repair protein MutL from Lactobacillus johnsonii (strain CNCM I-12250 / La1 / NCC 533).